The sequence spans 302 residues: Stanniocalcin-2 (302 aa).

The first 24 residues, 1-24 (MCAERLGQFMTLALVLATFDPARG), serve as a signal peptide directing secretion. Residues 23-44 (RGTDATNPPEGPQDRSSQQKGR) form a disordered region. Asn-73 carries N-linked (GlcNAc...) asparagine glycosylation. Residues 217–302 (KPPTAPPERQ…EQSEYSDIRR (86 aa)) are disordered. Residues 227 to 264 (PQVDRTKLSRAHHGEAGHHLPEPSSRETGRGAKGERGS) show a composition bias toward basic and acidic residues. Residues Ser-250 and Ser-251 each carry the phosphoserine; by FAM20C modification. The residue at position 254 (Thr-254) is a Phosphothreonine; by FAM20C.

Belongs to the stanniocalcin family. As to quaternary structure, homodimer; disulfide-linked. In terms of tissue distribution, expressed in a variety of tissues including muscle, heart, pancreas, kidney, spleen, prostate, small intestine, colon and peripheral blood leukocytes.

It is found in the secreted. In terms of biological role, has an anti-hypocalcemic action on calcium and phosphate homeostasis. This Homo sapiens (Human) protein is Stanniocalcin-2 (STC2).